A 140-amino-acid chain; its full sequence is MQYILGIDFGLKRIGTALVNTIDRFPSPFRVFAVQNNLQQAVNTLFKDLKQAGYELVQIVIGFPHFHYQSSIQVSIHKFVELIKTRFNVPVTLIDESGTTSEVKANLQELGLKNRTFKKAKDTLAATLILERFLNQQKPN.

Belongs to the YqgF nuclease family.

It localises to the cytoplasm. Functionally, could be a nuclease involved in processing of the 5'-end of pre-16S rRNA. In Mycoplasma pneumoniae (strain ATCC 29342 / M129 / Subtype 1) (Mycoplasmoides pneumoniae), this protein is Putative pre-16S rRNA nuclease.